The chain runs to 584 residues: Probable terpene synthase 9 (584 aa).

Residues D339, D343, and E491 each coordinate Mg(2+). The DDXXD motif signature appears at 339–343 (DDMYD).

The protein belongs to the terpene synthase family. Mg(2+) serves as cofactor.

Its function is as follows. Probable sesquiterpene synthase. This chain is Probable terpene synthase 9 (TPS9), found in Ricinus communis (Castor bean).